The following is a 199-amino-acid chain: Probable GTP-binding protein EngB (199 aa).

Residues Asp-28 to Leu-199 form the EngB-type G domain. Residues Gly-36 to Ser-43, Gly-63 to Leu-67, Asp-81 to Gly-84, Thr-148 to Asp-151, and Phe-180 to Ser-182 each bind GTP. Mg(2+) is bound by residues Ser-43 and Thr-65.

It belongs to the TRAFAC class TrmE-Era-EngA-EngB-Septin-like GTPase superfamily. EngB GTPase family. The cofactor is Mg(2+).

Functionally, necessary for normal cell division and for the maintenance of normal septation. The protein is Probable GTP-binding protein EngB of Streptococcus equi subsp. equi (strain 4047).